The sequence spans 1356 residues: MGSEAAAAARAVVVAVNGERYEAVGVDPSTTLLEFLRTRTPVRGPKLGCGEGGCGACVVVVSKYDAVADEVTEFSASSCLTLLGSLHHCAVTTSEGIGNSRDGFHAVQRRLSGFHASQCGFCTPGMCMSIYSALAKADKASGRPAPPTGFSKITAAEAEKAVSGNLCRCTGYRPIVDACKSFAADVDLEDLGLNAFWKKGVDDEHADINKLPAYSGGAAVCTFPEFLKSEIRSSMGQANGDTSAVVVTGDGWFHPKSVEEFHRLFDSNLFDERSVKIVASNTGSGVYKDQDLHDKYINISQIPELSAINRSSKGVEIGAVVSISQAIDILSDGGAVFRKIADHLSKVASPFVRNTATIGGNIIMAQRLSFSSDIATVLLAAGSTVTIQVAAKRMCITLEEFLKQPPCDSRTLLVSISIPDWGSDDGITFQTFRAAPRPLGNAVSYVNSAFLARSSVDGSSGSHLIEDVCLAFGPFGAKHAIRAREVEKFLKGKLVSAPVILEAVRLLKGVVSPAEGTTHPEYRVSLAVSYLFKFLSSLTNGLDEPENANVPNGSFTNGTANGIVDSSPEKHSNVDSSYLPIKSRQEMVFSDEYRPIGKPIEKTGAELQASGEAVYVDDISAPKDCLYGAFIYSTHPHAHIKGVNFRSSLASQKVITVITLKDIPTNGKNIGSCSPMLGDEALFVDPVSEFAGQNIGVVIAETQKYAYMAAKQSVIEYSTENLQPPILTVEDAVQHNSYFQVPPFLAPTPIGEFNQAMSEADHKIIDGEVKLESQYYFYMETQTALAIPDEDNCITLYVSAQLPEITQNTVARCLGIPYHNVRIITRRVGGGFGGKAMKAIHVATACAVAAFKLRRPVRMYLDRKTDMIMAGGRHPMKVKYSVGFKSDGKITGLHVDLRINCGISPDCSPALPVAIVGALKKYNWGALSFDIKLCKTNVSSKSAMRAPGDAQGSFIAEAIVEHIASTLSVDTNAIRRKNLHDFESLKVFYGNSAGDPSTYSLVTIFDKLASSPEYQQRAAVVEHFNAGSRWKKRGISCVPITYDVRLRPSPGKVSIMNDGSIAVEVGGVEIGQGLWTKVKQMTAFALGQLCDDGGEGLLDKVRVIQADTLSMIQGGFTGGSTTSETSCEAVRKSCAALVERLKPIKEKAGTLPWKSLIAQASMASVKLTEHAYWTPDPTFTSYLNYGAAISEVEVDVLTGETTILRSDLVYDCGQSLNPAVDLGQVEGAFVQGIGFFTNEEYTTNSDGLVINDGTWTYKIPTVDTIPKQFNVELINSARDHKRVLSSKASGEPPLLLASSVHCAMREAIRAARKEFAGAGGSSLTFQMDVPATMPIVKELCGLDVVERDLESFAAKA.

Residues 10–97 (RAVVVAVNGE…HCAVTTSEGI (88 aa)) enclose the 2Fe-2S ferredoxin-type domain. Residues cysteine 49, cysteine 54, cysteine 57, and cysteine 79 each contribute to the [2Fe-2S] cluster site. Positions 245–437 (VVVTGDGWFH…TFQTFRAAPR (193 aa)) constitute an FAD-binding PCMH-type domain. A disordered region spans residues 552 to 576 (NGSFTNGTANGIVDSSPEKHSNVDS).

This sequence belongs to the xanthine dehydrogenase family. Aldehyde oxidases (AO) are homodimers and heterodimers of AO subunits. [2Fe-2S] cluster serves as cofactor. Requires FAD as cofactor. It depends on Mo-molybdopterin as a cofactor.

The catalysed reaction is an aldehyde + O2 + H2O = a carboxylate + H2O2 + H(+). In Oryza sativa subsp. japonica (Rice), this protein is Probable aldehyde oxidase 3.